The sequence spans 216 residues: Probable transaldolase (216 aa).

K83 functions as the Schiff-base intermediate with substrate in the catalytic mechanism.

Belongs to the transaldolase family. Type 3B subfamily.

The protein resides in the cytoplasm. The enzyme catalyses D-sedoheptulose 7-phosphate + D-glyceraldehyde 3-phosphate = D-erythrose 4-phosphate + beta-D-fructose 6-phosphate. The protein operates within carbohydrate degradation; pentose phosphate pathway; D-glyceraldehyde 3-phosphate and beta-D-fructose 6-phosphate from D-ribose 5-phosphate and D-xylulose 5-phosphate (non-oxidative stage): step 2/3. In terms of biological role, transaldolase is important for the balance of metabolites in the pentose-phosphate pathway. This chain is Probable transaldolase, found in Symbiobacterium thermophilum (strain DSM 24528 / JCM 14929 / IAM 14863 / T).